A 281-amino-acid chain; its full sequence is Lectin alpha chain (281 aa).

N-linked (GlcNAc...) asparagine glycans are attached at residues asparagine 35, asparagine 82, and asparagine 140.

This sequence belongs to the leguminous lectin family. In terms of assembly, tetramer of 2 alpha and 2 beta chains. In terms of processing, glycosylated. Post-translationally, the beta chain is produced by partial proteolytic processing of the alpha chain.

In terms of biological role, D-galactose-binding lectin. The sequence is that of Lectin alpha chain from Lablab purpureus (Hyacinth bean).